The sequence spans 240 residues: Probable transcriptional regulatory protein A2cp1_1765 (240 aa).

This sequence belongs to the TACO1 family.

The protein localises to the cytoplasm. This chain is Probable transcriptional regulatory protein A2cp1_1765, found in Anaeromyxobacter dehalogenans (strain 2CP-1 / ATCC BAA-258).